The following is a 297-amino-acid chain: GTPase Era (297 aa).

An Era-type G domain is found at 7–174; it reads RSGFVSIIGR…VEVVHGFIPA (168 aa). The interval 15 to 22 is G1; the sequence is GRPNVGKS. 15–22 is a binding site for GTP; the sequence is GRPNVGKS. Residues 41–45 are G2; it reads QTTRN. The tract at residues 62 to 65 is G3; sequence DTPG. GTP is bound by residues 62–66 and 124–127; these read DTPGI and NKID. Residues 124–127 form a G4 region; it reads NKID. Residues 153-155 are G5; it reads VSA. The region spanning 205–282 is the KH type-2 domain; the sequence is THDEVPYSVA…FLELFVRVSK (78 aa).

It belongs to the TRAFAC class TrmE-Era-EngA-EngB-Septin-like GTPase superfamily. Era GTPase family. Monomer.

It is found in the cytoplasm. The protein resides in the cell inner membrane. An essential GTPase that binds both GDP and GTP, with rapid nucleotide exchange. Plays a role in 16S rRNA processing and 30S ribosomal subunit biogenesis and possibly also in cell cycle regulation and energy metabolism. This is GTPase Era from Geotalea uraniireducens (strain Rf4) (Geobacter uraniireducens).